The chain runs to 553 residues: Terpene synthase 16 (553 aa).

Residues Asp-303, Asp-307, and Glu-457 each contribute to the Mg(2+) site. A DDXXD motif motif is present at residues Asp-303–Asp-307.

This sequence belongs to the terpene synthase family. Tpsa subfamily. Mg(2+) serves as cofactor. Requires Mn(2+) as cofactor. Expressed in leaves, trichomes and flowers.

The protein operates within secondary metabolite biosynthesis; terpenoid biosynthesis. Its function is as follows. Sesquiterpene synthase involved in the biosynthesis of volatile compounds. No activity detected with geranyl diphosphate (GPP) and farnesyl diphosphate (FPP) as substrates. The chain is Terpene synthase 16 from Solanum lycopersicum (Tomato).